The following is a 260-amino-acid chain: Uroplakin-1b (260 aa).

Residues 1–12 (MAKDDSSVRCFQ) are Cytoplasmic-facing. Residues 13–38 (GLLIFGNVIVGMCGIALTAECIFFVS) form a helical membrane-spanning segment. Residues 39–60 (DQHSLYPLLEATDNDDIYGAAW) are Extracellular-facing. A helical membrane pass occupies residues 61–81 (IGMFVGICLFCLSVLGIVGIM). The Cytoplasmic portion of the chain corresponds to 82–86 (KSNRK). The helical transmembrane segment at 87-107 (ILLAYFILMFIVYGFEVASCI) threads the bilayer. The Extracellular segment spans residues 108–229 (TAATQRDFFT…ELISGPMNRH (122 aa)). Residues 230–250 (AWGVAWFGFAILCWTFWVLLG) traverse the membrane as a helical segment. Topologically, residues 251 to 260 (TMFYWSRIEY) are cytoplasmic.

It belongs to the tetraspanin (TM4SF) family. As to quaternary structure, heterodimer with uroplakin-3A (UPK3A) or uroplakin-3B (UPK3B).

It is found in the membrane. Functionally, component of the asymmetric unit membrane (AUM); a highly specialized biomembrane elaborated by terminally differentiated urothelial cells. The protein is Uroplakin-1b (UPK1B) of Neovison vison (American mink).